The sequence spans 232 residues: 5'-methylthioadenosine/S-adenosylhomocysteine nucleosidase (232 aa).

The active-site Proton acceptor is Glu-12. Substrate is bound by residues Gly-78, Val-152, and Met-173–Glu-174. Asp-197 serves as the catalytic Proton donor.

The protein belongs to the PNP/UDP phosphorylase family. MtnN subfamily. In terms of assembly, homodimer.

It catalyses the reaction S-adenosyl-L-homocysteine + H2O = S-(5-deoxy-D-ribos-5-yl)-L-homocysteine + adenine. The catalysed reaction is S-methyl-5'-thioadenosine + H2O = 5-(methylsulfanyl)-D-ribose + adenine. It carries out the reaction 5'-deoxyadenosine + H2O = 5-deoxy-D-ribose + adenine. The protein operates within amino-acid biosynthesis; L-methionine biosynthesis via salvage pathway; S-methyl-5-thio-alpha-D-ribose 1-phosphate from S-methyl-5'-thioadenosine (hydrolase route): step 1/2. In terms of biological role, catalyzes the irreversible cleavage of the glycosidic bond in both 5'-methylthioadenosine (MTA) and S-adenosylhomocysteine (SAH/AdoHcy) to adenine and the corresponding thioribose, 5'-methylthioribose and S-ribosylhomocysteine, respectively. Also cleaves 5'-deoxyadenosine, a toxic by-product of radical S-adenosylmethionine (SAM) enzymes, into 5-deoxyribose and adenine. Thus, is required for in vivo function of the radical SAM enzymes biotin synthase and lipoic acid synthase, that are inhibited by 5'-deoxyadenosine accumulation. The chain is 5'-methylthioadenosine/S-adenosylhomocysteine nucleosidase from Buchnera aphidicola subsp. Acyrthosiphon pisum (strain APS) (Acyrthosiphon pisum symbiotic bacterium).